The sequence spans 365 residues: Chorismate synthase (365 aa).

R46 serves as a coordination point for NADP(+). FMN is bound by residues 123-125, 241-242, G281, 296-300, and R322; these read RSS, NG, and KPTPS.

It belongs to the chorismate synthase family. As to quaternary structure, homotetramer. It depends on FMNH2 as a cofactor.

The catalysed reaction is 5-O-(1-carboxyvinyl)-3-phosphoshikimate = chorismate + phosphate. It functions in the pathway metabolic intermediate biosynthesis; chorismate biosynthesis; chorismate from D-erythrose 4-phosphate and phosphoenolpyruvate: step 7/7. Functionally, catalyzes the anti-1,4-elimination of the C-3 phosphate and the C-6 proR hydrogen from 5-enolpyruvylshikimate-3-phosphate (EPSP) to yield chorismate, which is the branch point compound that serves as the starting substrate for the three terminal pathways of aromatic amino acid biosynthesis. This reaction introduces a second double bond into the aromatic ring system. The polypeptide is Chorismate synthase (Helicobacter pylori (strain G27)).